The chain runs to 170 residues: Ribosome maturation factor RimM (170 aa).

In terms of domain architecture, PRC barrel spans 98–170 (PDEYYWVDLE…LIVVDWDPDF (73 aa)).

Belongs to the RimM family. As to quaternary structure, binds ribosomal protein uS19.

Its subcellular location is the cytoplasm. Functionally, an accessory protein needed during the final step in the assembly of 30S ribosomal subunit, possibly for assembly of the head region. Essential for efficient processing of 16S rRNA. May be needed both before and after RbfA during the maturation of 16S rRNA. It has affinity for free ribosomal 30S subunits but not for 70S ribosomes. This is Ribosome maturation factor RimM from Xanthomonas axonopodis pv. citri (strain 306).